We begin with the raw amino-acid sequence, 336 residues long: Dihydroorotate dehydrogenase (quinone) (336 aa).

FMN-binding positions include 62–66 (AGLDK) and T86. K66 serves as a coordination point for substrate. A substrate-binding site is contributed by 111–115 (NRMGF). N139 and N172 together coordinate FMN. A substrate-binding site is contributed by N172. Residue S175 is the Nucleophile of the active site. N177 provides a ligand contact to substrate. 2 residues coordinate FMN: K217 and T245. 246–247 (NT) lines the substrate pocket. Residues G268, G297, and 318 to 319 (YS) contribute to the FMN site.

This sequence belongs to the dihydroorotate dehydrogenase family. Type 2 subfamily. In terms of assembly, monomer. Requires FMN as cofactor.

It is found in the cell membrane. It catalyses the reaction (S)-dihydroorotate + a quinone = orotate + a quinol. The protein operates within pyrimidine metabolism; UMP biosynthesis via de novo pathway; orotate from (S)-dihydroorotate (quinone route): step 1/1. Functionally, catalyzes the conversion of dihydroorotate to orotate with quinone as electron acceptor. The protein is Dihydroorotate dehydrogenase (quinone) of Yersinia pseudotuberculosis serotype O:1b (strain IP 31758).